The sequence spans 210 residues: Large ribosomal subunit protein uL3 (210 aa).

Residues N131–S140 are compositionally biased toward polar residues. Residues N131 to R150 are disordered. N5-methylglutamine is present on Q151.

Belongs to the universal ribosomal protein uL3 family. As to quaternary structure, part of the 50S ribosomal subunit. Forms a cluster with proteins L14 and L19. In terms of processing, methylated by PrmB.

Functionally, one of the primary rRNA binding proteins, it binds directly near the 3'-end of the 23S rRNA, where it nucleates assembly of the 50S subunit. The sequence is that of Large ribosomal subunit protein uL3 from Acidithiobacillus ferrooxidans (strain ATCC 23270 / DSM 14882 / CIP 104768 / NCIMB 8455) (Ferrobacillus ferrooxidans (strain ATCC 23270)).